Here is a 289-residue protein sequence, read N- to C-terminus: GTPase Era (289 aa).

Residues 2–167 (KSGFISLIGR…LDEIYKYLPE (166 aa)) form the Era-type G domain. A G1 region spans residues 10-17 (GRTNAGKS). 10-17 (GRTNAGKS) is a GTP binding site. A G2 region spans residues 36-40 (NATRR). The interval 57–60 (DTPG) is G3. GTP-binding positions include 57-61 (DTPGL) and 116-119 (TKID). A G4 region spans residues 116–119 (TKID). The tract at residues 146 to 148 (LSV) is G5. Residues 198-274 (VSDEVPYSTD…FLKINVKIDK (77 aa)) form the KH type-2 domain.

Belongs to the TRAFAC class TrmE-Era-EngA-EngB-Septin-like GTPase superfamily. Era GTPase family. Monomer.

The protein resides in the cytoplasm. It is found in the cell inner membrane. In terms of biological role, an essential GTPase that binds both GDP and GTP, with rapid nucleotide exchange. Plays a role in 16S rRNA processing and 30S ribosomal subunit biogenesis and possibly also in cell cycle regulation and energy metabolism. The polypeptide is GTPase Era (Campylobacter fetus subsp. fetus (strain 82-40)).